A 224-amino-acid chain; its full sequence is Transcription cofactor HES-6 (224 aa).

Residues 1–31 form a disordered region; sequence MAPSQAPSRDRAGQEDEDRWEARGDRKARKP. The segment covering 8-25 has biased composition (basic and acidic residues); the sequence is SRDRAGQEDEDRWEARGD. Residues 25-77 form the bHLH domain; sequence DRKARKPLVEKKRRARINESLQELRLLLAGTEVQAKLENAEVLELTVRRVQGA. The region spanning 96–129 is the Orange domain; the sequence is FAAGYIQCMHEVHTFVSTCQAIDATVSAELLNHL. The tract at residues 146–209 is disordered; it reads GDSLAGLPGG…GPDLVSTSLG (64 aa). Over residues 158–171 the composition is skewed to low complexity; that stretch reads RSSWPPGGSPESPL. Residues 181–190 are compositionally biased toward acidic residues; that stretch reads LCSDLEEIPE. Positions 221-224 match the WRPW motif motif; the sequence is WRPW.

As to quaternary structure, transcription repression requires formation of a complex with a corepressor protein of the Groucho/TLE family. Interacts with HES1. As to expression, expressed in both undifferentiated and differentiated cells. High levels of expression are observed in several embryonic tissues including the nervous system, muscle and thymus. In the nervous system, initially expressed in the closing neural tube, then in the spinal cord, cranial and dorsal root ganglia, and brain neuroepithelium. Also expressed in epithelial cells of the embryonic respiratory, urinary and digestive systems. In the limb buds, expressed in skeletal muscle and presumptive tendons.

Its subcellular location is the nucleus. Does not bind DNA itself but suppresses both HES1-mediated N box-dependent transcriptional repression and binding of HES1 to E box sequences. Also suppresses HES1-mediated inhibition of the heterodimer formed by ASCL1/MASH1 and TCF3/E47, allowing ASCL1 and TCF3 to up-regulate transcription in its presence. Promotes cell differentiation. This Mus musculus (Mouse) protein is Transcription cofactor HES-6.